Here is a 305-residue protein sequence, read N- to C-terminus: Putative S-adenosyl-L-methionine-dependent methyltransferase Mvan_1344 (305 aa).

S-adenosyl-L-methionine is bound by residues Asp-130 and 159–160 (DL).

Belongs to the UPF0677 family.

Exhibits S-adenosyl-L-methionine-dependent methyltransferase activity. The chain is Putative S-adenosyl-L-methionine-dependent methyltransferase Mvan_1344 from Mycolicibacterium vanbaalenii (strain DSM 7251 / JCM 13017 / BCRC 16820 / KCTC 9966 / NRRL B-24157 / PYR-1) (Mycobacterium vanbaalenii).